Consider the following 389-residue polypeptide: (+)-bicyclogermacrene synthase TS4 (389 aa).

Mg(2+) contacts are provided by Asp-136, Glu-140, His-284, Gly-288, and Asp-292. The DDxx(x)D/E motif signature appears at 136–140; the sequence is DEVCE. The NDxxSxxxD/E motif motif lies at 284–292; the sequence is HDFIGLQKD.

The protein belongs to the terpene synthase family.

It carries out the reaction (2E,6E)-farnesyl diphosphate = bicyclogermacrene + diphosphate. In terms of biological role, catalyzes the cyclization of trans,trans-farnesyl diphosphate (FPP) to the bicyclic sesquiterpene bicyclogermacrene. In Penicillium expansum (Blue mold rot fungus), this protein is (+)-bicyclogermacrene synthase TS4.